Consider the following 414-residue polypeptide: uncharacterized protein (414 aa).

A signal peptide spans 1-16 (MRVILLLAFLISLTEC). Residues 20-59 (SEDLALYDLVEEVGVNFYEWFDIPRDASSNQVKKAYRKLT) enclose the Myb-like 1 domain. The J domain maps to 35-99 (NFYEWFDIPR…ELREKYDNVL (65 aa)). The helical transmembrane segment at 125-145 (ILVLLFIGTIAHYLMMWAAYF) threads the bilayer. Residues 211-234 (MTPKEVEPEEPTEEELAQQRRQQR) are disordered. The span at 217-226 (EPEEPTEEEL) shows a compositional bias: acidic residues. A Myb-like 2 domain is found at 274–320 (AQKQSGATWTPDELASLVRLSTEKYPAGTPNRWEQMGRVLNRSAEDV). In terms of domain architecture, SANT spans 352–407 (KSEDDWSQAEQKAFETALQKYPKGTDERWERISEEIGSKTKKQVMVRFKQLAEMIR).

The protein resides in the nucleus membrane. This is an uncharacterized protein from Caenorhabditis elegans.